We begin with the raw amino-acid sequence, 300 residues long: Ribosomal protein L11 methyltransferase (300 aa).

Residues Thr-152, Gly-173, Asp-195, and Asn-234 each coordinate S-adenosyl-L-methionine.

It belongs to the methyltransferase superfamily. PrmA family.

The protein localises to the cytoplasm. The catalysed reaction is L-lysyl-[protein] + 3 S-adenosyl-L-methionine = N(6),N(6),N(6)-trimethyl-L-lysyl-[protein] + 3 S-adenosyl-L-homocysteine + 3 H(+). In terms of biological role, methylates ribosomal protein L11. This Burkholderia ambifaria (strain ATCC BAA-244 / DSM 16087 / CCUG 44356 / LMG 19182 / AMMD) (Burkholderia cepacia (strain AMMD)) protein is Ribosomal protein L11 methyltransferase.